Reading from the N-terminus, the 1350-residue chain is Probable serine/threonine-protein kinase DDB_G0278845 (1350 aa).

Disordered regions lie at residues 66-109, 121-159, 179-249, 270-296, 337-396, 431-506, 525-596, and 612-701; these read RELN…NNIR, ENGL…PKGL, LANN…LNSI, SSIN…NEYS, NNYN…RDDL, GSTI…EKKK, NDSN…IPTP, and NNNS…NTNE. Positions 84–98 are enriched in polar residues; sequence KYLTSSHSSVVIPQD. Composition is skewed to low complexity over residues 127 to 140 and 181 to 210; these read SPTS…TPTT and NNNN…NNSN. The span at 211–222 shows a compositional bias: polar residues; it reads KISRLINNSNTT. Over residues 223 to 235 the composition is skewed to low complexity; the sequence is DSNASIRSSNNNN. The segment covering 236–246 has biased composition (acidic residues); it reads DDFDNNDDEDL. 2 stretches are compositionally biased toward low complexity: residues 270 to 293 and 337 to 391; these read SSIN…DNVN and NNYN…GYNN. Residues 431–443 are compositionally biased toward polar residues; the sequence is GSTIFTSTSSDIA. Positions 454–482 are enriched in acidic residues; that stretch reads NENENENENENENENENDNDSDSENENEN. Low complexity-rich tracts occupy residues 483–495 and 525–551; these read DNSI…KSNS and NDSN…PFSP. The segment covering 565–592 has biased composition (polar residues); sequence PKPTLQRQRSNSKNVLYSPNASPSNSCK. 3 stretches are compositionally biased toward low complexity: residues 612–637, 645–679, and 690–701; these read NNNS…NNID, NNNN…NNNN, and KKTPNNKINTNE. In terms of domain architecture, Protein kinase spans 756–1082; it reads FTLIEKIGEG…VENIKNHIFF (327 aa). Residues 762–770 and K785 each bind ATP; that span reads IGEGGFGQV. The Proton acceptor role is filled by D880. The 121-residue stretch at 1083–1203 folds into the AGC-kinase C-terminal domain; sequence NGVPWGKLHD…PRADDQPLLW (121 aa). 4 disordered regions span residues 1129–1159, 1190–1219, 1232–1285, and 1300–1350; these read SLLP…NDKM, GFTY…NNNN, NNNN…NKTV, and NCNN…KQQQ. The span at 1131–1142 shows a compositional bias: pro residues; the sequence is LPPPLPPPPQTP. Composition is skewed to low complexity over residues 1204-1219, 1232-1283, and 1300-1313; these read NNNN…NNNN, NNNN…SNNK, and NCNN…NNIN. Composition is skewed to polar residues over residues 1314 to 1330 and 1338 to 1350; these read TGNL…SGEN and PTSP…KQQQ.

Belongs to the protein kinase superfamily. AGC Ser/Thr protein kinase family.

The catalysed reaction is L-seryl-[protein] + ATP = O-phospho-L-seryl-[protein] + ADP + H(+). The enzyme catalyses L-threonyl-[protein] + ATP = O-phospho-L-threonyl-[protein] + ADP + H(+). The protein is Probable serine/threonine-protein kinase DDB_G0278845 of Dictyostelium discoideum (Social amoeba).